A 904-amino-acid chain; its full sequence is E3 ubiquitin-protein ligase ZNF598 (904 aa).

The RING-type zinc finger occupies 29-69; sequence CVLCCGDLEATALGRCDHPVCYRCSTKMRVLCEQRYCAVCR. The C2H2-type zinc-finger motif lies at 187 to 210; it reads PLCKFCDERYLDNDELLKHLRRDH. Tyrosine 306 carries the post-translational modification Phosphotyrosine. Disordered stretches follow at residues 312-469 and 490-656; these read YSRQ…GLAL and VSSV…LPRP. Over residues 346-358 the composition is skewed to low complexity; the sequence is AAAVRASVAAQQQ. The span at 359–388 shows a compositional bias: basic and acidic residues; the sequence is EEARRSEDQEEGGRPKKEEAAARGPEDPRG. Positions 404-416 are enriched in polar residues; the sequence is ETSTNGPVSQEAF. The segment covering 418-431 has biased composition (low complexity); it reads VTGPAAPGCVGVPG. Phosphoserine occurs at positions 428, 431, and 437. Composition is skewed to low complexity over residues 447-461 and 502-513; these read SLSASTSSSCSTAAT and SLVSAWNSSSSS. A compositionally biased stretch (polar residues) spans 521-531; the sequence is LSAQATGSGQP. Residues 534-543 are compositionally biased toward basic residues; it reads KAGKGSRGGR. Positions 564–584 are enriched in polar residues; the sequence is LLSTRPTGSVSSTLGLASIQP.

The protein belongs to the ZNF598/HEL2 family. In terms of assembly, interacts with the E2 ubiquitin-conjugating enzyme UBE2D3. Component of the 4EHP-GYF2 complex, at least composed of EIF4E2, GIGYF2 and ZNF598.

Its subcellular location is the cytoplasm. The protein localises to the cytosol. It catalyses the reaction S-ubiquitinyl-[E2 ubiquitin-conjugating enzyme]-L-cysteine + [acceptor protein]-L-lysine = [E2 ubiquitin-conjugating enzyme]-L-cysteine + N(6)-ubiquitinyl-[acceptor protein]-L-lysine.. It participates in protein modification; protein ubiquitination. E3 ubiquitin-protein ligase that plays a key role in the ribosome quality control (RQC), a pathway that takes place when a ribosome has stalled during translation, leading to degradation of nascent peptide chains. ZNF598 is activated when ribosomes are stalled within an mRNA following translation of prematurely polyadenylated mRNAs. Acts as a ribosome collision sensor: specifically recognizes and binds collided di-ribosome, which arises when a trailing ribosome encounters a slower leading ribosome, leading to terminally arrest translation. Following binding to colliding ribosomes, mediates monoubiquitination of 40S ribosomal proteins RPS10/eS10 and RPS3/uS3, and 'Lys-63'-linked polyubiquitination of RPS20/uS10. Polyubiquitination of RPS20/uS10 promotes recruitment of the RQT (ribosome quality control trigger) complex, which drives the disassembly of stalled ribosomes, followed by degradation of nascent peptides. E3 ubiquitin-protein ligase activity is dependent on the E2 ubiquitin-conjugating enzyme UBE2D3. Also acts as an adapter that recruits the 4EHP-GYF2 complex to mRNAs. Independently of its role in RQC, may also act as a negative regulator of interferon-stimulated gene (ISG) expression. In terms of biological role, (Microbial infection) Required for poxvirus protein synthesis by mediating ubiquitination of RPS10/eS10 and RPS20/uS10. Poxvirus encoding mRNAs contain unusual 5' poly(A) leaders and ZNF598 is required for their translational efficiency, possibly via its ability to suppress readthrough or sliding on shorter poly(A) tracts. This Homo sapiens (Human) protein is E3 ubiquitin-protein ligase ZNF598.